The sequence spans 444 residues: Phosphoglucosamine mutase (444 aa).

Serine 104 serves as the catalytic Phosphoserine intermediate. Mg(2+) is bound by residues serine 104, aspartate 243, aspartate 245, and aspartate 247. The residue at position 104 (serine 104) is a Phosphoserine.

The protein belongs to the phosphohexose mutase family. Mg(2+) is required as a cofactor. Activated by phosphorylation.

The enzyme catalyses alpha-D-glucosamine 1-phosphate = D-glucosamine 6-phosphate. Catalyzes the conversion of glucosamine-6-phosphate to glucosamine-1-phosphate. This is Phosphoglucosamine mutase from Neisseria meningitidis serogroup C / serotype 2a (strain ATCC 700532 / DSM 15464 / FAM18).